The following is a 264-amino-acid chain: Phosphate import ATP-binding protein PstB (264 aa).

The region spanning 11–250 is the ABC transporter domain; sequence LKAEALSVYY…DTTEKIFDSP (240 aa). 43–50 is an ATP binding site; it reads GPSGCGKS.

It belongs to the ABC transporter superfamily. Phosphate importer (TC 3.A.1.7) family. The complex is composed of two ATP-binding proteins (PstB), two transmembrane proteins (PstC and PstA) and a solute-binding protein (PstS).

The protein resides in the cell inner membrane. It carries out the reaction phosphate(out) + ATP + H2O = ADP + 2 phosphate(in) + H(+). Its function is as follows. Part of the ABC transporter complex PstSACB involved in phosphate import. Responsible for energy coupling to the transport system. In Synechococcus sp. (strain ATCC 27144 / PCC 6301 / SAUG 1402/1) (Anacystis nidulans), this protein is Phosphate import ATP-binding protein PstB.